Here is a 171-residue protein sequence, read N- to C-terminus: Co-chaperone protein HscB homolog (171 aa).

The J domain maps to 2-74; the sequence is NHFELFGLPP…ISRAEYLLSQ (73 aa).

This sequence belongs to the HscB family. In terms of assembly, interacts with HscA and stimulates its ATPase activity.

Functionally, co-chaperone involved in the maturation of iron-sulfur cluster-containing proteins. Seems to help targeting proteins to be folded toward HscA. The sequence is that of Co-chaperone protein HscB homolog from Vibrio vulnificus (strain CMCP6).